Consider the following 269-residue polypeptide: Tryptophan synthase alpha chain (269 aa).

Active-site proton acceptor residues include glutamate 49 and aspartate 60.

This sequence belongs to the TrpA family. As to quaternary structure, tetramer of two alpha and two beta chains.

The enzyme catalyses (1S,2R)-1-C-(indol-3-yl)glycerol 3-phosphate + L-serine = D-glyceraldehyde 3-phosphate + L-tryptophan + H2O. Its pathway is amino-acid biosynthesis; L-tryptophan biosynthesis; L-tryptophan from chorismate: step 5/5. Functionally, the alpha subunit is responsible for the aldol cleavage of indoleglycerol phosphate to indole and glyceraldehyde 3-phosphate. In Delftia acidovorans (strain DSM 14801 / SPH-1), this protein is Tryptophan synthase alpha chain.